The primary structure comprises 415 residues: Calcium/calmodulin-dependent serine/threonine-protein kinase (415 aa).

Residues tyrosine 12–valine 308 enclose the Protein kinase domain. ATP is bound by residues leucine 18–valine 26 and lysine 46. Catalysis depends on aspartate 173, which acts as the Proton acceptor. Residues methionine 318 to serine 328 are calmodulin-binding.

Belongs to the protein kinase superfamily. CAMK Ser/Thr protein kinase family. CaMK subfamily.

It carries out the reaction L-seryl-[protein] + ATP = O-phospho-L-seryl-[protein] + ADP + H(+). The enzyme catalyses L-threonyl-[protein] + ATP = O-phospho-L-threonyl-[protein] + ADP + H(+). May be involved in signal transduction processes. The polypeptide is Calcium/calmodulin-dependent serine/threonine-protein kinase (Malus domestica (Apple)).